Here is a 68-residue protein sequence, read N- to C-terminus: Large ribosomal subunit protein bL31 (68 aa).

Zn(2+) is bound by residues C17, C19, C37, and C40.

Belongs to the bacterial ribosomal protein bL31 family. Type A subfamily. As to quaternary structure, part of the 50S ribosomal subunit. Zn(2+) is required as a cofactor.

Functionally, binds the 23S rRNA. In Dehalococcoides mccartyi (strain CBDB1), this protein is Large ribosomal subunit protein bL31.